A 29-amino-acid polypeptide reads, in one-letter code: Cyclotide mela-4 (29 aa).

Positions 1 to 29 (GKPICGETCFKGKCYTPGCTCSYPICKKN) form a cross-link, cyclopeptide (Gly-Asn). 3 disulfide bridges follow: Cys5–Cys19, Cys9–Cys21, and Cys14–Cys26.

In terms of processing, this is a cyclic peptide. Contains 3 disulfide bonds.

In terms of biological role, probably participates in a plant defense mechanism (Potential). Binds to and induces leakage in phospholipd membranes, particularly ones containing 1-palmitoyl-2-oleophosphatidylethanolamine (POPE). In vitro, displays cytotoxicity against cultured cells. Not active against Gram-negative bacterium E.coli ATCC 25922 or Gram-positive bacterium S.aureus ATCC 25923 up to a concentration of 64 uM. The protein is Cyclotide mela-4 of Melicytus latifolius (Norfolk Island mahoe).